A 434-amino-acid polypeptide reads, in one-letter code: Adenylosuccinate synthetase (434 aa).

GTP-binding positions include 15–21 (GDEGKGK) and 43–45 (GHT). Catalysis depends on D16, which acts as the Proton acceptor. Residues D16 and G43 each coordinate Mg(2+). IMP is bound by residues 16 to 19 (DEGK), 41 to 44 (NAGH), T133, R147, Q228, T243, and R307. The active-site Proton donor is the H44. Substrate is bound at residue 303 to 309 (SVTGRAR). GTP-binding positions include R309, 335 to 337 (KLD), and 418 to 420 (STG).

Belongs to the adenylosuccinate synthetase family. As to quaternary structure, homodimer. Mg(2+) serves as cofactor.

It localises to the cytoplasm. It catalyses the reaction IMP + L-aspartate + GTP = N(6)-(1,2-dicarboxyethyl)-AMP + GDP + phosphate + 2 H(+). The protein operates within purine metabolism; AMP biosynthesis via de novo pathway; AMP from IMP: step 1/2. Plays an important role in the de novo pathway of purine nucleotide biosynthesis. Catalyzes the first committed step in the biosynthesis of AMP from IMP. In Neisseria meningitidis serogroup C / serotype 2a (strain ATCC 700532 / DSM 15464 / FAM18), this protein is Adenylosuccinate synthetase.